Reading from the N-terminus, the 198-residue chain is Superoxide dismutase [Mn], mitochondrial (198 aa).

H26 provides a ligand contact to Mn(2+). A 3'-nitrotyrosine modification is found at Y34. 2 positions are modified to N6-acetyllysine; alternate: K44 and K51. K44 and K51 each carry N6-succinyllysine; alternate. A Mn(2+)-binding site is contributed by H74. N6-acetyllysine is present on K90. N6-acetyllysine; alternate is present on residues K98 and K106. Residues K98 and K106 each carry the N6-succinyllysine; alternate modification. The Mn(2+) site is built by D159 and H163. K178 carries the post-translational modification N6-acetyllysine.

It belongs to the iron/manganese superoxide dismutase family. As to quaternary structure, homotetramer. Requires Mn(2+) as cofactor. Nitrated under oxidative stress. Nitration coupled with oxidation inhibits the catalytic activity. In terms of processing, acetylation at Lys-98 decreases enzymatic activity. Deacetylated by SIRT3 upon exposure to ionizing radiations or after long fasting. Post-translationally, polyubiquitinated; leading to proteasomal degradation. Deubiquitinated by USP36 which increases protein stability.

The protein resides in the mitochondrion matrix. The catalysed reaction is 2 superoxide + 2 H(+) = H2O2 + O2. Functionally, destroys superoxide anion radicals which are normally produced within the cells and which are toxic to biological systems. The sequence is that of Superoxide dismutase [Mn], mitochondrial (SOD2) from Pan troglodytes (Chimpanzee).